A 955-amino-acid chain; its full sequence is UPF0182 protein PMT_0755 (955 aa).

9 consecutive transmembrane segments (helical) span residues leucine 25 to phenylalanine 45, tryptophan 58 to tryptophan 78, leucine 107 to leucine 127, isoleucine 146 to asparagine 166, cysteine 178 to isoleucine 198, phenylalanine 214 to isoleucine 234, cysteine 264 to leucine 284, serine 313 to glutamine 333, and leucine 340 to valine 360.

It belongs to the UPF0182 family.

Its subcellular location is the cell membrane. The sequence is that of UPF0182 protein PMT_0755 from Prochlorococcus marinus (strain MIT 9313).